We begin with the raw amino-acid sequence, 570 residues long: NADPH oxidase 2 (570 aa).

The Cytoplasmic segment spans residues 2-9 (GNWAVNEG). Residues 10–36 (LSIFVILVWLGLNVFLFINYYKVYDDG) form a helical membrane-spanning segment. Topologically, residues 37–46 (PKYNYTRKLL) are extracellular. An N-linked (GlcNAc...) asparagine glycan is attached at N40. The chain crosses the membrane as a helical span at residues 47-72 (GSALALARAPAACLNFNCMLILLPVC). One can recognise a Ferric oxidoreductase domain in the interval 54 to 286 (RAPAACLNFN…MFLYLCERLV (233 aa)). Over 73 to 95 (RNLLSFLRGSSACCSTRIRRQLD) the chain is Cytoplasmic. A helical transmembrane segment spans residues 96 to 130 (RNLTFHKMVAWMIALHTAIHTIAHLFNVEWCVNAR). H101 and H115 together coordinate heme b. Residues 131–163 (VGISDRYSIALSDIGDNENEEYLNFAREKIKNP) are Extracellular-facing. Residues K159 and K161 each participate in a glycyl lysine isopeptide (Lys-Gly) (interchain with G-Cter in ubiquitin) cross-link. The helical transmembrane segment at 164–194 (EGGLYVAVTRLAGITGIVITLCLILIITSST) threads the bilayer. Over 195 to 203 (KTIRRSYFE) the chain is Cytoplasmic. FAD-binding residues include R199 and S200. The chain crosses the membrane as a helical span at residues 204–222 (VFWYTHHLFVIFFIGLAIH). Heme b contacts are provided by W206, H209, H222, R226, and I227. At 223–267 (GAERIVRGQTAESLEEHNLDICADKIEEWGKIKECPVPKFAGNPP) the chain is on the extracellular side. Residue K255 forms a Glycyl lysine isopeptide (Lys-Gly) (interchain with G-Cter in ubiquitin) linkage. Residues M268, Y280, and R287 each contribute to the heme b site. Residues 268–285 (MTWKWIVGPMFLYLCERL) traverse the membrane as a helical segment. Residues 286 to 570 (VRFWRSQQKV…VHFIFNKENF (285 aa)) are Cytoplasmic-facing. The 111-residue stretch at 287 to 397 (RFWRSQQKVV…DGPFGTASED (111 aa)) folds into the FAD-binding FR-type domain. Glycyl lysine isopeptide (Lys-Gly) (interchain with G-Cter in ubiquitin) cross-links involve residues K294, K299, K306, K328, and K334. FAD is bound by residues W337, H338, P339, T341, H354, R356, W361, and T362. K381 is covalently cross-linked (Glycyl lysine isopeptide (Lys-Gly) (interchain with G-Cter in ubiquitin)). 3 residues coordinate NADPH: I411, R446, and T481. A Glycyl lysine isopeptide (Lys-Gly) (interchain with G-Cter in ubiquitin) cross-link involves residue K506. R513 provides a ligand contact to NADPH. K567 is covalently cross-linked (Glycyl lysine isopeptide (Lys-Gly) (interchain with G-Cter in ubiquitin)).

Component of the phagocyte NADPH oxidase core complex/cytochrome b558 complex, composed of CYBB (heavy chain (beta)) and CYBA (light chain (alpha)). Component of the phagocyte NADPH oxidase complex composed of an obligatory core heterodimer formed by the membrane proteins CYBA and CYBB and the cytosolic regulatory subunits NCF1/p47-phox, NCF2/p67-phox, NCF4/p40-phox and the small GTPase RAC1 or RAC2. Interacts with NCF1 (phosphorylated form). Interacts with NCF2; the interaction is enhanced in the presence of GBP7. Interacts with RAC2. Interacts with RAC1. Interacts with calprotectin (S100A8/9). Interacts with NRROS; the interaction is direct and impairs formation of a stable NADPH oxidase complex. Interacts with CYBC1; CYBC1 may act as a chaperone stabilizing Cytochrome b-245 heterodimer. The CYBA:CYBB complex interacts with GBP7. Requires FAD as cofactor. Post-translationally, glycosylated. Phosphorylated on Ser and Thr residues by PKC during neutrophils activation. Phosphorylation enhances the NADPH oxidase activity and stimulates its interaction with RAC2, NCF2/p67-phox, and NCF1/p47-phox. In terms of processing, undergoes 'Lys-48'-linked polyubiquitination, likely by RNF145, triggering endoplasmic reticulum-associated degradation.

It localises to the cell membrane. The catalysed reaction is NADPH + 2 O2 = 2 superoxide + NADP(+) + H(+). Catalytic subunit of the phagocyte NADPH oxidase complex that mediates the transfer of electrons from cytosolic NADPH to O2 to produce the superoxide anion (O2(-)). In the activated complex, electrons are first transferred from NADPH to flavin adenine dinucleotide (FAD) and subsequently transferred via two heme molecules to molecular oxygen, producing superoxide through an outer-sphere reaction. Activation of the NADPH oxidase complex is initiated by the assembly of cytosolic subunits of the NADPH oxidase complex with the core NADPH oxidase complex to form a complex at the plasma membrane or phagosomal membrane. This activation process is initiated by phosphorylation dependent binding of the cytosolic NCF1/p47-phox subunit to the C-terminus of CYBA/p22-phox. NADPH oxidase complex assembly is impaired through interaction with NRROS. This is NADPH oxidase 2 from Mus musculus (Mouse).